Consider the following 520-residue polypeptide: Laccase-4 (520 aa).

Residues 1 to 18 (MGRFSSLCALTAVIHSFG) form the signal peptide. 3 Plastocyanin-like domains span residues 24–149 (IGPV…MVVY), 161–303 (VDDE…ILRY), and 370–491 (TVPV…FSED). Asparagine 73 and asparagine 76 each carry an N-linked (GlcNAc...) asparagine glycan. Cu cation-binding residues include histidine 86, histidine 88, histidine 131, and histidine 133. Intrachain disulfides connect cysteine 107/cysteine 509 and cysteine 139/cysteine 227. Asparagine 239 and asparagine 399 each carry an N-linked (GlcNAc...) asparagine glycan. Residues histidine 418, histidine 421, histidine 423, histidine 473, cysteine 474, histidine 475, and histidine 479 each contribute to the Cu cation site. A glycan (N-linked (GlcNAc...) asparagine) is linked at asparagine 497.

This sequence belongs to the multicopper oxidase family. As to quaternary structure, homodimer. The cofactor is Cu cation.

The protein localises to the secreted. It catalyses the reaction 4 hydroquinone + O2 = 4 benzosemiquinone + 2 H2O. Lignin degradation and detoxification of lignin-derived products. The chain is Laccase-4 (LCC4) from Trametes villosa (White-rot fungus).